A 70-amino-acid polypeptide reads, in one-letter code: uncharacterized protein (70 aa).

The HTH cro/C1-type domain maps to 5-59; the sequence is IREFRAKYGMTQEELAKKVGVRRETIVFLEKGKYNPSLRLAYKIARVFNARIEDL. The H-T-H motif DNA-binding region spans 16 to 35; it reads QEELAKKVGVRRETIVFLEK.

This is an uncharacterized protein from Archaeoglobus fulgidus (strain ATCC 49558 / DSM 4304 / JCM 9628 / NBRC 100126 / VC-16).